Here is a 332-residue protein sequence, read N- to C-terminus: L-lactate dehydrogenase A chain (332 aa).

N-acetylalanine is present on A2. The residue at position 5 (K5) is an N6-acetyllysine; alternate. K5 carries the post-translational modification N6-succinyllysine; alternate. Position 14 is an N6-acetyllysine (K14). 29–57 is a binding site for NAD(+); that stretch reads GAVGMACAISILMKELADEIALVDVMEDK. The residue at position 57 (K57) is an N6-acetyllysine; alternate. A Glycyl lysine isopeptide (Lys-Gly) (interchain with G-Cter in SUMO2); alternate cross-link involves residue K57. K81 carries the N6-acetyllysine modification. R99 lines the NAD(+) pocket. A substrate-binding site is contributed by R106. N6-acetyllysine; alternate is present on K118. Residue K118 is modified to N6-succinyllysine; alternate. The residue at position 126 (K126) is an N6-acetyllysine. N138 contacts NAD(+). N138 and R169 together coordinate substrate. H193 functions as the Proton acceptor in the catalytic mechanism. An N6-acetyllysine mark is found at K224 and K232. Y239 carries the phosphotyrosine modification. Residue K243 is modified to N6-acetyllysine. Residue T248 coordinates substrate. T309 bears the Phosphothreonine mark. The residue at position 318 (K318) is an N6-acetyllysine; alternate. An N6-succinyllysine; alternate modification is found at K318. Phosphothreonine is present on T322.

This sequence belongs to the LDH/MDH superfamily. LDH family. In terms of assembly, homotetramer. Interacts with PTEN upstream reading frame protein MP31. Post-translationally, ISGylated.

It localises to the cytoplasm. The catalysed reaction is (S)-lactate + NAD(+) = pyruvate + NADH + H(+). It functions in the pathway fermentation; pyruvate fermentation to lactate; (S)-lactate from pyruvate: step 1/1. Functionally, interconverts simultaneously and stereospecifically pyruvate and lactate with concomitant interconversion of NADH and NAD(+). In Sus scrofa (Pig), this protein is L-lactate dehydrogenase A chain (LDHA).